We begin with the raw amino-acid sequence, 354 residues long: Neutral protease 2 homolog BCIN_12g06300 (354 aa).

Residues 1–19 (MRSFSKILAVASLAAIANS) form the signal peptide. Positions 20–179 (AVLKRDNNVL…PSSIDRRTVL (160 aa)) are excised as a propeptide. 2 disulfide bridges follow: C183/C255 and C262/C280. H305 provides a ligand contact to Zn(2+). The active site involves E306. Zn(2+) is bound by residues H309 and D320.

Belongs to the peptidase M35 family. The cofactor is Zn(2+).

Its subcellular location is the secreted. The catalysed reaction is Preferential cleavage of bonds with hydrophobic residues in P1'. Also 3-Asn-|-Gln-4 and 8-Gly-|-Ser-9 bonds in insulin B chain.. Secreted metalloproteinase that allows assimilation of proteinaceous substrates. Shows high activities on basic nuclear substrates such as histone and protamine. This Botryotinia fuckeliana (strain B05.10) (Noble rot fungus) protein is Neutral protease 2 homolog BCIN_12g06300.